A 1107-amino-acid polypeptide reads, in one-letter code: Unconventional myosin-Ie (1107 aa).

The region spanning 19 to 692 (SGVDDMVLLS…SLFLLEEMRE (674 aa)) is the Myosin motor domain. ATP is bound at residue 112-119 (GESGAGKT). The segment at 581-591 (PHYIRCIKPNE) is actin-binding. The 30-residue stretch at 695-724 (YDGYARVIQKTWRKFVARKKYVQMREEASD) folds into the IQ domain. One can recognise a TH1 domain in the interval 730–922 (KERRRNSINR…NKVLQVSIGP (193 aa)). Residues 919–1052 (SIGPGLPKNS…KPQPKPKPQV (134 aa)) are disordered. 2 stretches are compositionally biased toward polar residues: residues 979 to 989 (NQRSNQKSLYT) and 998 to 1012 (RQQS…QTPE). The residue at position 1001 (S1001) is a Phosphoserine. The span at 1034-1051 (RPPPAGGRPKPQPKPKPQ) shows a compositional bias: pro residues. Residues 1050 to 1107 (PQVPQCKALYAYDAQDTDELSFNANDIIDIIKEDPSGWWTGRLRGKQGLFPNNYVTKI) enclose the SH3 domain.

The protein belongs to the TRAFAC class myosin-kinesin ATPase superfamily. Myosin family. In terms of assembly, interacts with CALM and F-actin. Interacts (via SH3 domain) with SYNJ1, DNM1 and DNM2. Interacts with ARL14EP. Interacts with CARMIL1. As to expression, detected in kidney glomeruli (at protein level). Detected in utricle.

Its subcellular location is the cytoplasm. It is found in the cell junction. The protein resides in the cytoplasmic vesicle. The protein localises to the clathrin-coated vesicle. It localises to the cytoskeleton. Functionally, myosins are actin-based motor molecules with ATPase activity. Unconventional myosins serve in intracellular movements. Their highly divergent tails bind to membranous compartments, which are then moved relative to actin filaments. Binds to membranes containing anionic phospholipids via its tail domain. Involved in clathrin-mediated endocytosis and intracellular movement of clathrin-coated vesicles. Required for normal morphology of the glomerular basement membrane, normal development of foot processes by kidney podocytes and normal kidney function. In dendritic cells, may control the movement of class II-containing cytoplasmic vesicles along the actin cytoskeleton by connecting them with the actin network via ARL14EP and ARL14. The polypeptide is Unconventional myosin-Ie (Myo1e) (Mus musculus (Mouse)).